The chain runs to 233 residues: 5'-methylthioadenosine/S-adenosylhomocysteine nucleosidase (233 aa).

The active-site Proton acceptor is glutamate 12. Residues glycine 78, isoleucine 152, and 173–174 (ME) contribute to the substrate site. Aspartate 197 serves as the catalytic Proton donor.

The protein belongs to the PNP/UDP phosphorylase family. MtnN subfamily. As to quaternary structure, homodimer.

It carries out the reaction S-adenosyl-L-homocysteine + H2O = S-(5-deoxy-D-ribos-5-yl)-L-homocysteine + adenine. The enzyme catalyses S-methyl-5'-thioadenosine + H2O = 5-(methylsulfanyl)-D-ribose + adenine. The catalysed reaction is 5'-deoxyadenosine + H2O = 5-deoxy-D-ribose + adenine. Its pathway is amino-acid biosynthesis; L-methionine biosynthesis via salvage pathway; S-methyl-5-thio-alpha-D-ribose 1-phosphate from S-methyl-5'-thioadenosine (hydrolase route): step 1/2. In terms of biological role, catalyzes the irreversible cleavage of the glycosidic bond in both 5'-methylthioadenosine (MTA) and S-adenosylhomocysteine (SAH/AdoHcy) to adenine and the corresponding thioribose, 5'-methylthioribose and S-ribosylhomocysteine, respectively. Also cleaves 5'-deoxyadenosine, a toxic by-product of radical S-adenosylmethionine (SAM) enzymes, into 5-deoxyribose and adenine. Thus, is required for in vivo function of the radical SAM enzymes biotin synthase and lipoic acid synthase, that are inhibited by 5'-deoxyadenosine accumulation. The sequence is that of 5'-methylthioadenosine/S-adenosylhomocysteine nucleosidase from Yersinia pseudotuberculosis serotype O:1b (strain IP 31758).